The chain runs to 183 residues: Ribosome rescue factor SmrB (183 aa).

The Smr domain occupies 98 to 173 (LDLHGLTQLQ…GDAALLVLIE (76 aa)).

Belongs to the SmrB family. In terms of assembly, associates with collided ribosomes, but not with correctly translating polysomes.

Functionally, acts as a ribosome collision sensor. Detects stalled/collided disomes (pairs of ribosomes where the leading ribosome is stalled and a second ribosome has collided with it) and endonucleolytically cleaves mRNA at the 5' boundary of the stalled ribosome. Stalled/collided disomes form a new interface (primarily via the 30S subunits) that binds SmrB. Cleaved mRNA becomes available for tmRNA ligation, leading to ribosomal subunit dissociation and rescue of stalled ribosomes. This is Ribosome rescue factor SmrB from Shigella sonnei (strain Ss046).